The sequence spans 417 residues: NADH-quinone oxidoreductase subunit D (417 aa).

It belongs to the complex I 49 kDa subunit family. As to quaternary structure, NDH-1 is composed of 14 different subunits. Subunits NuoB, C, D, E, F, and G constitute the peripheral sector of the complex.

It localises to the cell inner membrane. It catalyses the reaction a quinone + NADH + 5 H(+)(in) = a quinol + NAD(+) + 4 H(+)(out). Its function is as follows. NDH-1 shuttles electrons from NADH, via FMN and iron-sulfur (Fe-S) centers, to quinones in the respiratory chain. The immediate electron acceptor for the enzyme in this species is believed to be ubiquinone. Couples the redox reaction to proton translocation (for every two electrons transferred, four hydrogen ions are translocated across the cytoplasmic membrane), and thus conserves the redox energy in a proton gradient. This Polaromonas naphthalenivorans (strain CJ2) protein is NADH-quinone oxidoreductase subunit D.